The primary structure comprises 87 residues: U3-theraphotoxin-Hhn1m (87 aa).

The N-terminal stretch at 1-24 (MVNMKASMFLTFAGLVLLFVVCYA) is a signal peptide. A propeptide spanning residues 25 to 52 (SESEEKEFPKEMLSSIFAVDNDFKQEER) is cleaved from the precursor. Disulfide bonds link Cys-54/Cys-67, Cys-61/Cys-72, and Cys-66/Cys-79.

This sequence belongs to the neurotoxin 10 (Hwtx-1) family. 51 (Hntx-8) subfamily. Hntx-8 sub-subfamily. In terms of tissue distribution, expressed by the venom gland.

It localises to the secreted. Its function is as follows. Ion channel inhibitor. This is U3-theraphotoxin-Hhn1m from Cyriopagopus hainanus (Chinese bird spider).